The following is a 172-amino-acid chain: Thioredoxin Y1, chloroplastic (172 aa).

A chloroplast-targeting transit peptide spans 1–62 (MASISLSSST…SSTTRCTPRR (62 aa)). The Thioredoxin domain occupies 63–169 (IEAKKQTFDS…LIQRIEDSLK (107 aa)). Active-site nucleophile residues include Cys-93 and Cys-96. Cys-93 and Cys-96 are joined by a disulfide.

This sequence belongs to the thioredoxin family. Plant Y-type subfamily. In terms of tissue distribution, expressed in roots and seeds.

Its subcellular location is the plastid. The protein localises to the chloroplast stroma. In terms of biological role, thiol-disulfide oxidoreductase that poorly activates chloroplastic malate dehydrogenase (NADP-MDH) and fructose-1,6-bisphosphatase. Provides reducing equivalents for peroxiredoxin Q. The sequence is that of Thioredoxin Y1, chloroplastic from Arabidopsis thaliana (Mouse-ear cress).